A 355-amino-acid chain; its full sequence is Isopentenyl-diphosphate delta-isomerase (355 aa).

Position 9-10 (9-10) interacts with substrate; it reads RK. Residues 67-69, S97, and N125 each bind FMN; that span reads AIT. 97-99 contributes to the substrate binding site; the sequence is SQR. Q161 is a binding site for substrate. E162 contacts Mg(2+). FMN is bound by residues K197, T227, 276–278, and 297–298; these read GIR and AL.

This sequence belongs to the IPP isomerase type 2 family. In terms of assembly, homooctamer. Dimer of tetramers. FMN serves as cofactor. It depends on NADPH as a cofactor. Mg(2+) is required as a cofactor.

The protein resides in the cytoplasm. It carries out the reaction isopentenyl diphosphate = dimethylallyl diphosphate. In terms of biological role, involved in the biosynthesis of isoprenoids. Catalyzes the 1,3-allylic rearrangement of the homoallylic substrate isopentenyl (IPP) to its allylic isomer, dimethylallyl diphosphate (DMAPP). This chain is Isopentenyl-diphosphate delta-isomerase, found in Methanococcus maripaludis (strain DSM 14266 / JCM 13030 / NBRC 101832 / S2 / LL).